The primary structure comprises 508 residues: Glycerol kinase (508 aa).

Residue T15 coordinates ADP. ATP contacts are provided by T15, S16, and S17. Residue T15 participates in sn-glycerol 3-phosphate binding. Residue R19 participates in ADP binding. Positions 85, 86, 138, and 251 each coordinate sn-glycerol 3-phosphate. Residues R85, E86, Y138, D251, and Q252 each contribute to the glycerol site. Residues T273, G317, and G419 each coordinate ADP. Residues T273, G317, and G419 each coordinate ATP.

This sequence belongs to the FGGY kinase family.

It carries out the reaction glycerol + ATP = sn-glycerol 3-phosphate + ADP + H(+). It participates in polyol metabolism; glycerol degradation via glycerol kinase pathway; sn-glycerol 3-phosphate from glycerol: step 1/1. With respect to regulation, inhibited by fructose 1,6-bisphosphate (FBP). Key enzyme in the regulation of glycerol uptake and metabolism. Catalyzes the phosphorylation of glycerol to yield sn-glycerol 3-phosphate. This Mycoplasma genitalium (strain ATCC 33530 / DSM 19775 / NCTC 10195 / G37) (Mycoplasmoides genitalium) protein is Glycerol kinase.